The chain runs to 202 residues: Urease accessory protein UreF (202 aa).

Belongs to the UreF family. In terms of assembly, ureD, UreF and UreG form a complex that acts as a GTP-hydrolysis-dependent molecular chaperone, activating the urease apoprotein by helping to assemble the nickel containing metallocenter of UreC. The UreE protein probably delivers the nickel.

The protein resides in the cytoplasm. Its function is as follows. Required for maturation of urease via the functional incorporation of the urease nickel metallocenter. The protein is Urease accessory protein UreF of Sporosarcina pasteurii (Bacillus pasteurii).